An 83-amino-acid polypeptide reads, in one-letter code: uncharacterized protein (83 aa).

The disordered stretch occupies residues 40–65 (RMQAGASPDEDNDVNGETSFSRSFGG). Over residues 54-65 (NGETSFSRSFGG) the composition is skewed to polar residues.

This is an uncharacterized protein from Dictyostelium discoideum (Social amoeba).